A 293-amino-acid polypeptide reads, in one-letter code: Acidic endochitinase (293 aa).

Positions Met-1–Asn-22 are cleaved as a signal peptide. The region spanning Ala-24–Val-293 is the GH18 domain. Disulfide bonds link Cys-43–Cys-90 and Cys-73–Cys-80. Glu-150 acts as the Proton donor in catalysis. Cysteines 179 and 208 form a disulfide.

The protein belongs to the glycosyl hydrolase 18 family. Chitinase class II subfamily.

The protein resides in the secreted. It is found in the extracellular space. It catalyses the reaction Random endo-hydrolysis of N-acetyl-beta-D-glucosaminide (1-&gt;4)-beta-linkages in chitin and chitodextrins.. This protein functions as a defense against chitin containing fungal pathogens. This Cicer arietinum (Chickpea) protein is Acidic endochitinase.